The chain runs to 564 residues: Septin-9 (564 aa).

M1 bears the N-acetylmethionine mark. S12 carries the post-translational modification Phosphoserine. Residues T24 and T31 each carry the phosphothreonine modification. Disordered regions lie at residues V38–D165 and P178–V224. K44 carries the N6-acetyllysine modification. Phosphoserine is present on residues S64, S67, and S71. Polar residues predominate over residues D95–G109. Over residues K116–E134 the composition is skewed to basic and acidic residues. At T125 the chain carries Phosphothreonine. Residues T190 to S203 show a composition bias toward polar residues. The residue at position 258 (Y258) is a Phosphotyrosine. Residues Q275–E546 enclose the Septin-type G domain. The G1 motif stretch occupies residues G285–S292. G285–S292 contributes to the GTP binding site. Phosphoserine occurs at positions 307 and 312. GTP is bound by residues T319, G345, K425 to E433, G480, and R495. Residues D342 to G345 are G3 motif. The segment at A424–D427 is G4 motif.

This sequence belongs to the TRAFAC class TrmE-Era-EngA-EngB-Septin-like GTPase superfamily. Septin GTPase family. Septins polymerize into heterooligomeric protein complexes that form filaments, and associate with cellular membranes, actin filaments, and microtubules. GTPase activity is required for filament formation. Interacts with SEPTIN2, SEPTIN6, SEPTIN7, SEPTIN11 and SEPTIN14. Interacts with RTKN and ARHGEF18. As to expression, expressed in the brain, mainly in the perikarya and processes of astrocytes in the cerebellum, dentate gyrus and corpus callosum (at protein level). In the sciatic nerve, highly expressed in Schwann cells (at protein level). Isoforms are differentially expressed in testes, kidney, liver, heart, spleen and brain. Undetectable in skeletal muscle.

It localises to the cytoplasm. The protein localises to the cytoskeleton. Filament-forming cytoskeletal GTPase. May play a role in cytokinesis (Potential). This chain is Septin-9, found in Rattus norvegicus (Rat).